The chain runs to 605 residues: Elongation factor 4 (605 aa).

Positions 9–192 (GMIRNFCIIA…AIVQRIPAPA (184 aa)) constitute a tr-type G domain. GTP is bound by residues 21-26 (DHGKST) and 139-142 (NKID).

This sequence belongs to the TRAFAC class translation factor GTPase superfamily. Classic translation factor GTPase family. LepA subfamily.

It localises to the cell inner membrane. It catalyses the reaction GTP + H2O = GDP + phosphate + H(+). Its function is as follows. Required for accurate and efficient protein synthesis under certain stress conditions. May act as a fidelity factor of the translation reaction, by catalyzing a one-codon backward translocation of tRNAs on improperly translocated ribosomes. Back-translocation proceeds from a post-translocation (POST) complex to a pre-translocation (PRE) complex, thus giving elongation factor G a second chance to translocate the tRNAs correctly. Binds to ribosomes in a GTP-dependent manner. This chain is Elongation factor 4, found in Chlorobaculum parvum (strain DSM 263 / NCIMB 8327) (Chlorobium vibrioforme subsp. thiosulfatophilum).